The primary structure comprises 368 residues: MVENSFCKKEGSPVVGDRINVKDLTLAGLERLLTGMGAERYRAGQVAIWVFQKGAESFREMTNLPANLREKLDAAAVISRPEILAKKVSSKKDAVKYLFGLPDGQAVESVFMKHAYGNSVCVSTQAGCRMGCRFCASALGGLTRNLSPGEIYDQVLGIRRDTGERISSVVLMGSGEPLDNYDATLTFIKNVTAPYGLHIGCRHITVSTCGLVPGIRRLAREKLALTLAVSLHAPNDRLRDILVPVNRKYPLTELMAACRDYAQETGRRVTFEYALLAGVNDRKEHAEELVRLLKGKMPCHVNLIPANPVPERGVKTPSRLQVELFKKILERHGLAVTVRRGLGADIDAACGQLRRKIAVMGERLNTRG.

Residue E108 is the Proton acceptor of the active site. Residues 114-345 (HAYGNSVCVS…VTVRRGLGAD (232 aa)) enclose the Radical SAM core domain. C121 and C350 form a disulfide bridge. Residues C128, C132, and C135 each contribute to the [4Fe-4S] cluster site. Residues 175-176 (GE), S207, 230-232 (SLH), and N307 contribute to the S-adenosyl-L-methionine site. The active-site S-methylcysteine intermediate is C350.

Belongs to the radical SAM superfamily. RlmN family. [4Fe-4S] cluster serves as cofactor.

It is found in the cytoplasm. The catalysed reaction is adenosine(2503) in 23S rRNA + 2 reduced [2Fe-2S]-[ferredoxin] + 2 S-adenosyl-L-methionine = 2-methyladenosine(2503) in 23S rRNA + 5'-deoxyadenosine + L-methionine + 2 oxidized [2Fe-2S]-[ferredoxin] + S-adenosyl-L-homocysteine. The enzyme catalyses adenosine(37) in tRNA + 2 reduced [2Fe-2S]-[ferredoxin] + 2 S-adenosyl-L-methionine = 2-methyladenosine(37) in tRNA + 5'-deoxyadenosine + L-methionine + 2 oxidized [2Fe-2S]-[ferredoxin] + S-adenosyl-L-homocysteine. Its function is as follows. Specifically methylates position 2 of adenine 2503 in 23S rRNA and position 2 of adenine 37 in tRNAs. This Pelotomaculum thermopropionicum (strain DSM 13744 / JCM 10971 / SI) protein is Probable dual-specificity RNA methyltransferase RlmN.